A 204-amino-acid polypeptide reads, in one-letter code: Serotype 3 fimbrial subunit (204 aa).

A signal peptide spans 1 to 25 (MSKFSYPALRAALILAASPVLPALA). A disulfide bond links Cys41 and Cys84.

Belongs to the fimbrial protein family.

It is found in the fimbrium. Bordetella pertussis is the causative agent of whooping cough. An essential step in the disease process is the attachment of the bacteria to the ciliated epithelium of the respiratory tract, enabling the organism to resist normal host-clearance mechanisms. It is unclear which bacterial cell surface component are responsible for adherence but the fimbriae of B.pertussis are prime candidates for being involved in this process. In Bordetella pertussis (strain Tohama I / ATCC BAA-589 / NCTC 13251), this protein is Serotype 3 fimbrial subunit (fim3).